A 377-amino-acid chain; its full sequence is MKEKVVSLAQDLIRRPSISPNDEGCQQIIAERLEKLGFQIEWMPFNDTLNLWAKHGTSEPVIAFAGHTDVVPTGDENQWSSPPFSAEIIDGMLYGRGAADMKGSLAAMIVAAEEYVKANPNHKGTIALLITSDEEATAKDGTIHVVETLMARDEKITYCMVGEPSSAKNLGDVVKNGRRGSITGNLYIQGIQGHVAYPHLAENPIHKAALFLQELTTYQWDKGNEFFPPTSLQIANIHAGTGSNNVIPAELYIQFNLRYCTEVTDEIIKQKVAEMLEKHNLKYRIEWNLSGKPFLTKPGKLLDSITSAIEETIGITPKAETGGGTSDGRFIALMGAEVVEFGPLNSTIHKVNECVSVEDLGKCGEIYHKMLVNLLDS.

Zn(2+) is bound at residue His67. Asp69 is a catalytic residue. Residue Asp100 coordinates Zn(2+). The active-site Proton acceptor is the Glu134. The Zn(2+) site is built by Glu135, Glu163, and His349.

As to quaternary structure, homodimer. The cofactor is Zn(2+).

The catalysed reaction is N-succinyl-(2S,6S)-2,6-diaminopimelate + H2O = (2S,6S)-2,6-diaminopimelate + succinate. It participates in amino-acid biosynthesis; L-lysine biosynthesis via DAP pathway; LL-2,6-diaminopimelate from (S)-tetrahydrodipicolinate (succinylase route): step 3/3. Competitively inhibited by L,L-DAP, D,L-DAP, 2-carboxyethylphosphonic acid (CEPA) and 5-mercaptopentanoic acid (MSPA). Succinate is a poor inhibitor. In terms of biological role, catalyzes the hydrolysis of N-succinyl-L,L-diaminopimelic acid (SDAP), forming succinate and LL-2,6-diaminopimelate (DAP), an intermediate involved in the bacterial biosynthesis of lysine and meso-diaminopimelic acid, an essential component of bacterial cell walls. It can only hydrolyze L,L-N-succinyl-diaminopimelic acid (L,L-SDAP) and is inactive toward D,L-, L,D-, and D,D-SDAP. The chain is Succinyl-diaminopimelate desuccinylase (dapE) from Haemophilus influenzae (strain ATCC 51907 / DSM 11121 / KW20 / Rd).